The chain runs to 203 residues: ATP-dependent Clp protease proteolytic subunit (203 aa).

S98 functions as the Nucleophile in the catalytic mechanism. Residue H123 is part of the active site.

It belongs to the peptidase S14 family. In terms of assembly, fourteen ClpP subunits assemble into 2 heptameric rings which stack back to back to give a disk-like structure with a central cavity, resembling the structure of eukaryotic proteasomes.

Its subcellular location is the cytoplasm. The catalysed reaction is Hydrolysis of proteins to small peptides in the presence of ATP and magnesium. alpha-casein is the usual test substrate. In the absence of ATP, only oligopeptides shorter than five residues are hydrolyzed (such as succinyl-Leu-Tyr-|-NHMec, and Leu-Tyr-Leu-|-Tyr-Trp, in which cleavage of the -Tyr-|-Leu- and -Tyr-|-Trp bonds also occurs).. Cleaves peptides in various proteins in a process that requires ATP hydrolysis. Has a chymotrypsin-like activity. Plays a major role in the degradation of misfolded proteins. The polypeptide is ATP-dependent Clp protease proteolytic subunit (Desulfotalea psychrophila (strain LSv54 / DSM 12343)).